Reading from the N-terminus, the 119-residue chain is Protein phosphatase EYA1 (119 aa).

This sequence belongs to the HAD-like hydrolase superfamily. EYA family. Requires Mg(2+) as cofactor.

The protein resides in the cytoplasm. It is found in the nucleus. The catalysed reaction is O-phospho-L-tyrosyl-[protein] + H2O = L-tyrosyl-[protein] + phosphate. The enzyme catalyses O-phospho-L-seryl-[protein] + H2O = L-seryl-[protein] + phosphate. It catalyses the reaction O-phospho-L-threonyl-[protein] + H2O = L-threonyl-[protein] + phosphate. In terms of biological role, functions both as protein phosphatase and as transcriptional coactivator for SIX1, and probably also for other transcription factors of this family. Tyrosine phosphatase that dephosphorylates 'Tyr-142' of histone H2AX (H2AXY142ph) and promotes efficient DNA repair via the recruitment of DNA repair complexes containing MDC1. 'Tyr-142' phosphorylation of histone H2AX plays a central role in DNA repair and acts as a mark that distinguishes between apoptotic and repair responses to genotoxic stress. Its function as histone phosphatase may contribute to its function in transcription regulation during organogenesis. Also has phosphatase activity with proteins phosphorylated on Ser and Thr residues (in vitro). Required for normal embryonic development of the skeleton, kidneys and ears. This chain is Protein phosphatase EYA1 (EYA1), found in Gallus gallus (Chicken).